The primary structure comprises 995 residues: Aconitate hydratase 2, mitochondrial (995 aa).

The N-terminal 83 residues, 1–83 (MYRRATSGVR…PASLRAQARN (83 aa)), are a transit peptide targeting the mitochondrion. Substrate-binding positions include Gln187 and 306–308 (DSH). 3 residues coordinate [4Fe-4S] cluster: Cys538, Cys604, and Cys607. Residues Arg637, Arg642, Arg800, and 881 to 882 (SR) contribute to the substrate site.

The protein belongs to the aconitase/IPM isomerase family. Monomer. Requires [4Fe-4S] cluster as cofactor. As to expression, mostly expressed in roots, leaves and flowers, also present in stems, and, at low levels, in seeds.

Its subcellular location is the mitochondrion. The enzyme catalyses citrate = D-threo-isocitrate. Its pathway is carbohydrate metabolism; tricarboxylic acid cycle; isocitrate from oxaloacetate: step 2/2. Catalyzes the isomerization of citrate to isocitrate via cis-aconitate. Contributes to oxidative stress tolerance. Involved in acetate assimilation. The protein is Aconitate hydratase 2, mitochondrial of Arabidopsis thaliana (Mouse-ear cress).